The following is a 104-amino-acid chain: Large ribosomal subunit protein bL28 (104 aa).

This sequence belongs to the bacterial ribosomal protein bL28 family.

The protein is Large ribosomal subunit protein bL28 of Wolbachia pipientis wMel.